The sequence spans 161 residues: MINLTIVLAVEEVAEKGGLFDINATLPLMAIQFLLLAFVLDKIFYKPLGKAIDSRADYIRENQVKAKERLAKAKQLAEQYEQEFAQTRQKSQVVIVAAQAEAEKIAATKVAVAQKEAQVKREQAAQEIEKQKEVALEQLEEQVDSLSRQILEKLLGPELVR.

The helical transmembrane segment at 26 to 45 threads the bilayer; sequence LPLMAIQFLLLAFVLDKIFY.

The protein belongs to the ATPase B chain family. In terms of assembly, F-type ATPases have 2 components, F(1) - the catalytic core - and F(0) - the membrane proton channel. F(1) has five subunits: alpha(3), beta(3), gamma(1), delta(1), epsilon(1). F(0) has four main subunits: a(1), b(1), b'(1) and c(10-14). The alpha and beta chains form an alternating ring which encloses part of the gamma chain. F(1) is attached to F(0) by a central stalk formed by the gamma and epsilon chains, while a peripheral stalk is formed by the delta, b and b' chains.

It is found in the cellular thylakoid membrane. Its function is as follows. F(1)F(0) ATP synthase produces ATP from ADP in the presence of a proton or sodium gradient. F-type ATPases consist of two structural domains, F(1) containing the extramembraneous catalytic core and F(0) containing the membrane proton channel, linked together by a central stalk and a peripheral stalk. During catalysis, ATP synthesis in the catalytic domain of F(1) is coupled via a rotary mechanism of the central stalk subunits to proton translocation. Component of the F(0) channel, it forms part of the peripheral stalk, linking F(1) to F(0). The b'-subunit is a diverged and duplicated form of b found in plants and photosynthetic bacteria. The protein is ATP synthase subunit b' of Trichodesmium erythraeum (strain IMS101).